We begin with the raw amino-acid sequence, 250 residues long: ATP synthase subunit a (250 aa).

A run of 5 helical transmembrane segments spans residues 27-47, 86-106, 129-149, 191-211, and 219-239; these read TDTVLSTAIAGLIVIALAFYL, FVLPLAVTIFVFILISNWLAV, INYVLALALFVFVCYHTAGIW, IFAGGILVALIALFPPYIMWA, and FDLFVGAIQAFIFALLTILYF.

This sequence belongs to the ATPase A chain family. As to quaternary structure, F-type ATPases have 2 components, CF(1) - the catalytic core - and CF(0) - the membrane proton channel. CF(1) has five subunits: alpha(3), beta(3), gamma(1), delta(1), epsilon(1). CF(0) has three main subunits: a(1), b(2) and c(9-12). The alpha and beta chains form an alternating ring which encloses part of the gamma chain. CF(1) is attached to CF(0) by a central stalk formed by the gamma and epsilon chains, while a peripheral stalk is formed by the delta and b chains.

It is found in the cell membrane. Key component of the proton channel; it plays a direct role in the translocation of protons across the membrane. This is ATP synthase subunit a from Mycobacterium bovis (strain ATCC BAA-935 / AF2122/97).